The primary structure comprises 492 residues: Cytochrome P450 monooxygenase MYCFIDRAFT_204672 (492 aa).

N-linked (GlcNAc...) asparagine glycosylation is present at asparagine 116. The chain crosses the membrane as a helical span at residues 269–293; that stretch reads FLISMIFISAANGCVVSGAMLYSIA. Asparagine 335 carries N-linked (GlcNAc...) asparagine glycosylation. Cysteine 430 provides a ligand contact to heme.

The protein belongs to the cytochrome P450 family. Heme is required as a cofactor.

The protein localises to the membrane. Its pathway is secondary metabolite biosynthesis. In terms of biological role, cytochrome P450 monooxygenase; part of the gene cluster that mediates the biosynthesis of an emodin derivative that may be involved in black Sigatoka disease of banana. The pathway begins with the synthesis of atrochrysone thioester by the polyketide synthase PKS8-1. The atrochrysone carboxyl ACP thioesterase MYCFIDRAFT_190111 then breaks the thioester bond and releases the atrochrysone carboxylic acid from PKS8-1. The decarboxylase MYCFIDRAFT_34057 then catalyzes the concerted decarboxylation-elimination required to convert atochrysone carboxylic acid into emodin anthrone, which is further oxidized to emodin by the anthrone oxygenase MYCFIDRAFT_34418. The functions of the other tailoring enzymes as well as the final product of the cluster have still to be identified. The chain is Cytochrome P450 monooxygenase MYCFIDRAFT_204672 from Pseudocercospora fijiensis (strain CIRAD86) (Black leaf streak disease fungus).